Reading from the N-terminus, the 147-residue chain is Large ribosomal subunit protein uL22c (147 aa).

This sequence belongs to the universal ribosomal protein uL22 family. As to quaternary structure, part of the 50S ribosomal subunit.

The protein localises to the plastid. Functionally, this protein binds specifically to 23S rRNA. The globular domain of the protein is located near the polypeptide exit tunnel on the outside of the subunit, while an extended beta-hairpin is found that lines the wall of the exit tunnel in the center of the 70S ribosome. This Cuscuta gronovii (Common dodder) protein is Large ribosomal subunit protein uL22c (rpl22).